Reading from the N-terminus, the 343-residue chain is Heat-inducible transcription repressor HrcA (343 aa).

This sequence belongs to the HrcA family.

Negative regulator of class I heat shock genes (grpE-dnaK-dnaJ and groELS operons). Prevents heat-shock induction of these operons. In Mycolicibacterium vanbaalenii (strain DSM 7251 / JCM 13017 / BCRC 16820 / KCTC 9966 / NRRL B-24157 / PYR-1) (Mycobacterium vanbaalenii), this protein is Heat-inducible transcription repressor HrcA.